The chain runs to 752 residues: Kaurene synthase like 2, chloroplastic (752 aa).

Residues 1-28 constitute a chloroplast transit peptide; the sequence is MSLLLSNSALVGPKFRSSRISHASASLD. Mg(2+) is bound by residues Asp538, Asp542, Asn682, and Glu690. Residues 538-542 carry the DDXXD motif motif; it reads DDLFD.

This sequence belongs to the terpene synthase family. Requires Mg(2+) as cofactor. In terms of tissue distribution, highly expressed in leaves.

Its subcellular location is the plastid. The protein localises to the chloroplast. It participates in secondary metabolite biosynthesis; terpenoid biosynthesis. Involved in the biosynthesis of ent-kaurene diterpenoids natural products such as oridonin, miltiradiene, eriocalyxin B and nezukol, known to exhibit antitumor, anti-inflammatory and antibacterial activities. Catalyzes the conversion of ent-copalyl diphosphate (ent-CPP) to ent-isopimaradiene like compounds. The sequence is that of Kaurene synthase like 2, chloroplastic from Isodon rubescens (Rabdosia rubescens).